The following is an 870-amino-acid chain: Glycerol-3-phosphate acyltransferase (870 aa).

Residues 1–27 form a disordered region; sequence MPKKNSPLLPKETTPTQSSVDTSGSSN. Residues 13–27 show a composition bias toward polar residues; it reads TTPTQSSVDTSGSSN. The HXXXXD motif motif lies at 351–356; the sequence is HRSHID.

The protein belongs to the GPAT/DAPAT family.

Its subcellular location is the cell inner membrane. It catalyses the reaction sn-glycerol 3-phosphate + an acyl-CoA = a 1-acyl-sn-glycero-3-phosphate + CoA. Its pathway is phospholipid metabolism; CDP-diacylglycerol biosynthesis; CDP-diacylglycerol from sn-glycerol 3-phosphate: step 1/3. This Xylella fastidiosa (strain 9a5c) protein is Glycerol-3-phosphate acyltransferase (plsB).